Consider the following 231-residue polypeptide: Homeobox protein engrailed-1a (231 aa).

3 disordered regions span residues 1-29, 43-105, and 121-148; these read MEDQ…AHRN, GCKR…KDSQ, and DRPS…RPRT. The segment covering 43–56 has biased composition (basic and acidic residues); that stretch reads GCKRERERVTRDSG. Over residues 68 to 102 the composition is skewed to low complexity; it reads DGVSSSASSTVSSPVSSRQSNKVEQGSSKSSSPSK. The segment at residues 143–202 is a DNA-binding region (homeobox); that stretch reads DKRPRTAFTAEQLQRLKAEFQTSRYITEQRRQALARELGLNESQIKIWFQNKRAKIKKSS.

The protein belongs to the engrailed homeobox family.

It localises to the nucleus. In Danio rerio (Zebrafish), this protein is Homeobox protein engrailed-1a (eng1a).